The sequence spans 116 residues: Small ribosomal subunit protein uS11m (116 aa).

This sequence belongs to the universal ribosomal protein uS11 family.

It localises to the mitochondrion. This chain is Small ribosomal subunit protein uS11m (RPS11), found in Chondrus crispus (Carrageen Irish moss).